The primary structure comprises 207 residues: Glycerol-3-phosphate acyltransferase (207 aa).

5 consecutive transmembrane segments (helical) span residues 4–24 (VVAT…SFAV), 58–78 (ILTL…AQLL), 86–106 (DMGI…PVFH), 120–140 (ILLA…LIIA), and 162–182 (VLLF…VLLI).

It belongs to the PlsY family. As to quaternary structure, probably interacts with PlsX.

It localises to the cell inner membrane. It carries out the reaction an acyl phosphate + sn-glycerol 3-phosphate = a 1-acyl-sn-glycero-3-phosphate + phosphate. Its pathway is lipid metabolism; phospholipid metabolism. In terms of biological role, catalyzes the transfer of an acyl group from acyl-phosphate (acyl-PO(4)) to glycerol-3-phosphate (G3P) to form lysophosphatidic acid (LPA). This enzyme utilizes acyl-phosphate as fatty acyl donor, but not acyl-CoA or acyl-ACP. The sequence is that of Glycerol-3-phosphate acyltransferase from Ralstonia nicotianae (strain ATCC BAA-1114 / GMI1000) (Ralstonia solanacearum).